An 849-amino-acid polypeptide reads, in one-letter code: Ribosome biogenesis protein ERB1 (849 aa).

A disordered region spans residues 1 to 130; that stretch reads MARNSIKKSP…PKDDDLSRIN (130 aa). Composition is skewed to acidic residues over residues 29-44 and 51-123; these read EAEEDSNDEESEDELN and ASDD…EPKD. The interval 286-405 is required for interaction with NOP7; sequence RFVPSKHEAK…LRQVPGYQDS (120 aa). Residues 405 to 441 form a required for interaction with YTM1 region; it reads SVRERFERSLDLYLAPRVRHNKLNIDPDSLIPDLPSP. WD repeat units follow at residues 457–496 and 505–545; these read GHTGKIRTISIDPQGLWLATGSDDGSVRIWEILTGRQVYK and NNED…FDIE. Residues 569-581 show a composition bias toward basic and acidic residues; sequence KISSQKEEDNKES. Residues 569–619 form a disordered region; the sequence is KISSQKEEDNKESDNEDEDEEEDNDDDDDDDEPETSSTVEPKKEVAKWYPP. The span at 582–602 shows a compositional bias: acidic residues; it reads DNEDEDEEEDNDDDDDDDEPE. WD repeat units follow at residues 633-675, 678-716, 719-758, 762-802, and 818-849; these read QCRK…SQSP, KSKGIIMDAKFHPFKPQLFVASQRQIKIYDLAQQVLLKK, PGVRLLSTIDIHPRGDNLIAGSYDKRVLWHDLDLSATPYK, YHEK…DLMT, and INQIGILDLIWHPKEPWLFSAGADGTARLWTT.

The protein belongs to the WD repeat BOP1/ERB1 family. As to quaternary structure, component of the NOP7 complex, composed of ERB1, NOP7 and YTM1. The complex is held together by ERB1, which interacts with NOP7 via its N-terminal domain and with YTM1 via a high-affinity interaction between the seven-bladed beta-propeller domains of the 2 proteins. The NOP7 complex associates with the 66S pre-ribosome.

The protein resides in the nucleus. The protein localises to the nucleolus. It localises to the nucleoplasm. Functionally, component of the NOP7 complex, which is required for maturation of the 25S and 5.8S ribosomal RNAs and formation of the 60S ribosome. This Candida albicans (strain SC5314 / ATCC MYA-2876) (Yeast) protein is Ribosome biogenesis protein ERB1.